Here is a 404-residue protein sequence, read N- to C-terminus: 6-deoxyerythronolide B hydroxylase (404 aa).

Residue C351 coordinates heme.

It belongs to the cytochrome P450 family. The cofactor is heme.

Its subcellular location is the cytoplasm. The catalysed reaction is 6-deoxyerythronolide B + 2 reduced [2Fe-2S]-[ferredoxin] + O2 + 2 H(+) = erythronolide B + 2 oxidized [2Fe-2S]-[ferredoxin] + H2O. It functions in the pathway antibiotic biosynthesis; erythromycin biosynthesis. Functionally, catalyzes the conversion of 6-deoxyerythronolide B (6-DEB) to erythronolide B (EB) by the insertion of an oxygen at the 6S position of 6-DEB. Requires the participation of a ferredoxin and a ferredoxin reductase for the transfer of electrons from NADPH to the monooxygenase. The sequence is that of 6-deoxyerythronolide B hydroxylase from Saccharopolyspora erythraea (strain ATCC 11635 / DSM 40517 / JCM 4748 / NBRC 13426 / NCIMB 8594 / NRRL 2338).